The sequence spans 224 residues: Octanoyltransferase (224 aa).

The region spanning 38 to 213 is the BPL/LPL catalytic domain; that stretch reads AETTDEVWLL…QFVRAAGFQS (176 aa). Substrate is bound by residues 77 to 84, 144 to 146, and 157 to 159; these read RGGQVTYH, SLG, and GLA. Cysteine 175 (acyl-thioester intermediate) is an active-site residue.

Belongs to the LipB family.

The protein localises to the cytoplasm. It carries out the reaction octanoyl-[ACP] + L-lysyl-[protein] = N(6)-octanoyl-L-lysyl-[protein] + holo-[ACP] + H(+). Its pathway is protein modification; protein lipoylation via endogenous pathway; protein N(6)-(lipoyl)lysine from octanoyl-[acyl-carrier-protein]: step 1/2. Functionally, catalyzes the transfer of endogenously produced octanoic acid from octanoyl-acyl-carrier-protein onto the lipoyl domains of lipoate-dependent enzymes. Lipoyl-ACP can also act as a substrate although octanoyl-ACP is likely to be the physiological substrate. This is Octanoyltransferase from Hahella chejuensis (strain KCTC 2396).